The chain runs to 186 residues: Large ribosomal subunit protein uL16 (186 aa).

This sequence belongs to the universal ribosomal protein uL16 family.

In Nanoarchaeum equitans (strain Kin4-M), this protein is Large ribosomal subunit protein uL16.